The following is a 326-amino-acid chain: Isopenicillin N synthase (326 aa).

Residues R84, Y88, and Y186 each coordinate isopenicillin N. N-[(5S)-5-amino-5-carboxypentanoyl]-L-cysteinyl-D-valine is bound by residues R84, Y88, Y186, H209, and D211. Residues L183–L283 form the Fe2OG dioxygenase domain. Residues H209, D211, and H265 each contribute to the Fe(2+) site. R274 lines the 2-oxoglutarate pocket. Position 276 (S276) interacts with isopenicillin N. Residue S276 coordinates N-[(5S)-5-amino-5-carboxypentanoyl]-L-cysteinyl-D-valine.

Belongs to the iron/ascorbate-dependent oxidoreductase family. Requires Fe cation as cofactor. It depends on L-ascorbate as a cofactor.

The catalysed reaction is N-[(5S)-5-amino-5-carboxypentanoyl]-L-cysteinyl-D-valine + O2 = isopenicillin N + 2 H2O. It participates in antibiotic biosynthesis; penicillin G biosynthesis; penicillin G from L-alpha-aminoadipate and L-cysteine and L-valine: step 2/3. Functionally, removes, in the presence of oxygen, 4 hydrogen atoms from delta-L-(alpha-aminoadipyl)-L-cysteinyl-D-valine (ACV) to form the azetidinone and thiazolidine rings of isopenicillin. This chain is Isopenicillin N synthase (pcbC), found in Lysobacter lactamgenus.